A 130-amino-acid polypeptide reads, in one-letter code: Larval cuticle protein 1 (130 aa).

Positions 1 to 16 are cleaved as a signal peptide; the sequence is MFKFVMICAVLGLAVA. In terms of domain architecture, Chitin-binding type R&amp;R spans 43-104; sequence ADGFDSSLHT…PSGAWIPTPP (62 aa).

In terms of biological role, component of the larval cuticle. This chain is Larval cuticle protein 1 (Lcp1), found in Drosophila melanogaster (Fruit fly).